Consider the following 321-residue polypeptide: MTKYALVGDVGGTNARLALCDIASGEISQAKTYSGLDYPSLEAVVRVYLDEHGVSVEDGCIAIACPITGDWVAMTNHTWAFSIAEMKKNLGFSHLEIINDFTAVSMAIPMLKKEHLIQFGGGEPVDGKPIAVYGAGTGLGVAHLVHVDKRWISLPGEGGHVDFAPNSEEEAMILEILRAEIGHVSAERVLSGPGLVNLYRAIVKSDNRLPENLRPKDITERALADSCIDCRRALSLFCVIMGRFGGDLALTMGTFGGVYIAGGIVPRFLEFFKASGFRGGFEDKGRFKDYVHGIPVYLIVHDNPGLLGSGAHLRQTLGHIL.

Residue 8–13 (GDVGGT) participates in ATP binding.

The protein belongs to the bacterial glucokinase family.

The protein resides in the cytoplasm. The enzyme catalyses D-glucose + ATP = D-glucose 6-phosphate + ADP + H(+). This Salmonella typhi protein is Glucokinase.